The sequence spans 482 residues: Catalase easC (482 aa).

Histidine 58 is an active-site residue. Tyrosine 347 serves as a coordination point for heme.

The protein belongs to the catalase family. The cofactor is heme.

The protein operates within alkaloid biosynthesis; ergot alkaloid biosynthesis. In terms of biological role, catalase; part of the gene cluster that mediates the biosynthesis of fungal ergot alkaloid. DmaW catalyzes the first step of ergot alkaloid biosynthesis by condensing dimethylallyl diphosphate (DMAP) and tryptophan to form 4-dimethylallyl-L-tryptophan. The second step is catalyzed by the methyltransferase easF that methylates 4-dimethylallyl-L-tryptophan in the presence of S-adenosyl-L-methionine, resulting in the formation of 4-dimethylallyl-L-abrine. The catalase easC and the FAD-dependent oxidoreductase easE then transform 4-dimethylallyl-L-abrine to chanoclavine-I which is further oxidized by easD in the presence of NAD(+), resulting in the formation of chanoclavine-I aldehyde. Chanoclavine-I aldehyde is the precursor of ergoamides and ergopeptines in Clavicipitaceae, and clavine-type alcaloids such as fumiclavine in Trichocomaceae. However, the metabolites downstream of chanoclavine-I aldehyde in Arthrodermataceae have not been identified yet. This Arthroderma otae (strain ATCC MYA-4605 / CBS 113480) (Microsporum canis) protein is Catalase easC.